Reading from the N-terminus, the 273-residue chain is Large ribosomal subunit protein uL2 (273 aa).

Residues 228-273 are disordered; that stretch reads VDHPHGGGEGKTSGGRHPVTPWGFPTKGKKTRKNKRTSKFIVKKRK. Positions 254–273 are enriched in basic residues; the sequence is KGKKTRKNKRTSKFIVKKRK.

The protein belongs to the universal ribosomal protein uL2 family. Part of the 50S ribosomal subunit. Forms a bridge to the 30S subunit in the 70S ribosome.

In terms of biological role, one of the primary rRNA binding proteins. Required for association of the 30S and 50S subunits to form the 70S ribosome, for tRNA binding and peptide bond formation. It has been suggested to have peptidyltransferase activity; this is somewhat controversial. Makes several contacts with the 16S rRNA in the 70S ribosome. The sequence is that of Large ribosomal subunit protein uL2 from Rickettsia canadensis (strain McKiel).